A 272-amino-acid polypeptide reads, in one-letter code: S-adenosylmethionine decarboxylase proenzyme (272 aa).

Ser-117 serves as the catalytic Schiff-base intermediate with substrate; via pyruvic acid. Ser-117 is modified (pyruvic acid (Ser); by autocatalysis). Catalysis depends on His-122, which acts as the Proton acceptor; for processing activity. Cys-145 serves as the catalytic Proton donor; for catalytic activity.

The protein belongs to the prokaryotic AdoMetDC family. Type 2 subfamily. Heterooctamer of four alpha and four beta chains arranged as a tetramer of alpha/beta heterodimers. Requires pyruvate as cofactor. In terms of processing, is synthesized initially as an inactive proenzyme. Formation of the active enzyme involves a self-maturation process in which the active site pyruvoyl group is generated from an internal serine residue via an autocatalytic post-translational modification. Two non-identical subunits are generated from the proenzyme in this reaction, and the pyruvate is formed at the N-terminus of the alpha chain, which is derived from the carboxyl end of the proenzyme. The post-translation cleavage follows an unusual pathway, termed non-hydrolytic serinolysis, in which the side chain hydroxyl group of the serine supplies its oxygen atom to form the C-terminus of the beta chain, while the remainder of the serine residue undergoes an oxidative deamination to produce ammonia and the pyruvoyl group blocking the N-terminus of the alpha chain.

The catalysed reaction is S-adenosyl-L-methionine + H(+) = S-adenosyl 3-(methylsulfanyl)propylamine + CO2. It functions in the pathway amine and polyamine biosynthesis; S-adenosylmethioninamine biosynthesis; S-adenosylmethioninamine from S-adenosyl-L-methionine: step 1/1. Catalyzes the decarboxylation of S-adenosylmethionine to S-adenosylmethioninamine (dcAdoMet), the propylamine donor required for the synthesis of the polyamines spermine and spermidine from the diamine putrescine. The sequence is that of S-adenosylmethionine decarboxylase proenzyme from Halorhodospira halophila (strain DSM 244 / SL1) (Ectothiorhodospira halophila (strain DSM 244 / SL1)).